Reading from the N-terminus, the 141-residue chain is Plasmatocyte-spreading peptide (141 aa).

The first 22 residues, 1–22 (MKLTINILFCLILISQYNSANG), serve as a signal peptide directing secretion. A propeptide spanning residues 23–118 (NLRDLFNNVR…ATGGKDDKGR (96 aa)) is cleaved from the precursor. The span at 46–58 (VKTLFHPSDKSGN) shows a compositional bias: basic and acidic residues. Positions 46 to 118 (VKTLFHPSDK…ATGGKDDKGR (73 aa)) are disordered. Residues 83-98 (PVAVTPAPVVSTTTQA) are compositionally biased toward low complexity. Polar residues predominate over residues 99–108 (SAPTVATNGT). The cysteines at positions 125 and 137 are disulfide-linked.

It belongs to the GBP/PSP1/paralytic peptide family.

In terms of biological role, mediates the spreading of plasmatocytes to foreign surfaces. Plasmocytes are a class of hemocytes involved in insect cellular immunity. The sequence is that of Plasmatocyte-spreading peptide (PSP1) from Chrysodeixis includens (Soybean looper).